The primary structure comprises 201 residues: Large ribosomal subunit protein uL4 (201 aa).

The segment at 46 to 71 is disordered; sequence QKTRAEVVGSGKKPWRQKGTGRARAG.

The protein belongs to the universal ribosomal protein uL4 family. As to quaternary structure, part of the 50S ribosomal subunit.

One of the primary rRNA binding proteins, this protein initially binds near the 5'-end of the 23S rRNA. It is important during the early stages of 50S assembly. It makes multiple contacts with different domains of the 23S rRNA in the assembled 50S subunit and ribosome. In terms of biological role, forms part of the polypeptide exit tunnel. In Shewanella woodyi (strain ATCC 51908 / MS32), this protein is Large ribosomal subunit protein uL4.